The primary structure comprises 797 residues: Probable exo-1,4-beta-xylosidase bxlB (797 aa).

Positions 1–21 (MPLICIVYFLQYLDKIAISYA) are cleaved as a signal peptide. N-linked (GlcNAc...) asparagine glycans are attached at residues Asn86 and Asn126. Asp312 is a catalytic residue. N-linked (GlcNAc...) asparagine glycans are attached at residues Asn364, Asn431, Asn442, Asn483, Asn644, and Asn787.

This sequence belongs to the glycosyl hydrolase 3 family.

It localises to the secreted. The enzyme catalyses Hydrolysis of (1-&gt;4)-beta-D-xylans, to remove successive D-xylose residues from the non-reducing termini.. The protein operates within glycan degradation; xylan degradation. Xylan 1,4-beta-xylosidase involved in the hydrolysis of xylan, a major structural heterogeneous polysaccharide found in plant biomass representing the second most abundant polysaccharide in the biosphere, after cellulose. This Aspergillus oryzae (strain ATCC 42149 / RIB 40) (Yellow koji mold) protein is Probable exo-1,4-beta-xylosidase bxlB (bxlB).